The following is a 293-amino-acid chain: Iron-sulfur cluster transfer protein Nubpl (293 aa).

The interval 214–217 is CXXC motif probably involved in coordinating iron-sulfur cluster binding; it reads CQNC.

It belongs to the Mrp/NBP35 ATP-binding proteins family. As to quaternary structure, homodimer; dimerization is not reliant on iron-sulfur cluster binding. [4Fe-4S] cluster is required as a cofactor.

The protein localises to the mitochondrion membrane. In terms of biological role, iron-sulfur cluster transfer protein involved in the assembly of the mitochondrial membrane respiratory chain NADH dehydrogenase (Complex I). May deliver one or more Fe-S clusters to complex I subunits. Alleviates pausing in mitochondrial DNA (mtDNA) replication at slow zone 2. May be involved in mtDNA-helicase-mediated mtDNA unwinding and replication by transferring iron-sulfur clusters. The protein is Iron-sulfur cluster transfer protein Nubpl of Drosophila melanogaster (Fruit fly).